The primary structure comprises 124 residues: Chemotaxis protein CheY1 (124 aa).

Positions 2-120 (KLLVVDDSST…VLKEKLEVVL (119 aa)) constitute a Response regulatory domain. Residues Asp7, Asp8, Asp53, and Asn55 each contribute to the Mg(2+) site. Asp53 carries the 4-aspartylphosphate modification.

In terms of assembly, interacts (when phosphorylated) with FliM. It depends on Mg(2+) as a cofactor. In terms of processing, phosphorylated by CheAY. Dephosphorylated (inactivated) by CheZ.

It is found in the cytoplasm. Functionally, chemotactic response regulator protein that modulates the rotation direction of bacterial flagellar motors. Plays an important role in the colonization and infection of Helicobacter pylori. Upon phosphorylation by CheA, interacts with the flagellar motor protein FliM to cause clockwise flagellar rotation and bacterial reversals, as opposed to straight swimming when CheY1 is not phosphorylated. This Helicobacter pylori (strain J99 / ATCC 700824) (Campylobacter pylori J99) protein is Chemotaxis protein CheY1 (cheY1).